A 130-amino-acid chain; its full sequence is MAIWQGRSLRKPSGGRIILARKKRKRELGREPAFTKVAEGREKKKIIRTYGGNRKVRLIEALYANVFDGGKGKKVKVLRVVENPANRQYVRRNIITKGAIIETEIGRAIVTSRPGQHGVVNAVLIKEENA.

Belongs to the eukaryotic ribosomal protein eS8 family. As to quaternary structure, part of the 30S ribosomal subunit.

This chain is Small ribosomal subunit protein eS8, found in Thermococcus onnurineus (strain NA1).